Consider the following 150-residue polypeptide: Protein Smg homolog (150 aa).

The protein belongs to the Smg family.

This Methylibium petroleiphilum (strain ATCC BAA-1232 / LMG 22953 / PM1) protein is Protein Smg homolog.